The sequence spans 64 residues: Large ribosomal subunit protein bL35 (64 aa).

Belongs to the bacterial ribosomal protein bL35 family.

The sequence is that of Large ribosomal subunit protein bL35 from Mycoplasmopsis pulmonis (strain UAB CTIP) (Mycoplasma pulmonis).